The chain runs to 259 residues: MAVGGQKKVTKGGKKGGKKKTADPFSKKEWYDIKAPAMFPKRTCARTLVTRTQGTRIASEALKGRVVTLSLGDLSEKNEEVFRKFKLQIEDVQGRHCLTNFHGLELTRDKLCSVVVKWRSTIEAHVDVKTTDGYLLRFFIITFTPSVPRSERLHSYAQTTRIKRIRARLVEIIQQEVSTCDLKEVVNKLIPDSIAQDARKAASWIYPLGETFIRKVKVLKRPKADLARLMELHGESKSTAPGETVSRPDHYEPPKVDSV.

Disordered stretches follow at residues 1-23 (MAVG…KTAD) and 235-259 (ESKS…VDSV). Positions 8 to 19 (KVTKGGKKGGKK) are enriched in basic residues. Over residues 246–259 (SRPDHYEPPKVDSV) the composition is skewed to basic and acidic residues.

This sequence belongs to the eukaryotic ribosomal protein eS1 family. In terms of assembly, component of the small ribosomal subunit. Mature ribosomes consist of a small (40S) and a large (60S) subunit. The 40S subunit contains about 33 different proteins and 1 molecule of RNA (18S). The 60S subunit contains about 49 different proteins and 3 molecules of RNA (28S, 5.8S and 5S).

It is found in the cytoplasm. The polypeptide is Small ribosomal subunit protein eS1 (Schistosoma japonicum (Blood fluke)).